The primary structure comprises 349 residues: Small ribosomal subunit biogenesis GTPase RsgA (349 aa).

Residues 1–11 (MSKKKLSKGQQ) show a composition bias toward basic residues. Residues 1 to 29 (MSKKKLSKGQQRRVSANHQRRLKKTESKV) are disordered. A CP-type G domain is found at 102–272 (HSVLTRPDYY…VIDSPGVREF (171 aa)). Residues 158–161 (NKID) and 212–220 (GQSGVGKSS) each bind GTP. Zn(2+) contacts are provided by C296, C301, H303, and C309.

This sequence belongs to the TRAFAC class YlqF/YawG GTPase family. RsgA subfamily. Monomer. Associates with 30S ribosomal subunit, binds 16S rRNA. Zn(2+) serves as cofactor.

The protein localises to the cytoplasm. Its function is as follows. One of several proteins that assist in the late maturation steps of the functional core of the 30S ribosomal subunit. Helps release RbfA from mature subunits. May play a role in the assembly of ribosomal proteins into the subunit. Circularly permuted GTPase that catalyzes slow GTP hydrolysis, GTPase activity is stimulated by the 30S ribosomal subunit. This is Small ribosomal subunit biogenesis GTPase RsgA from Pectobacterium carotovorum subsp. carotovorum (strain PC1).